Consider the following 149-residue polypeptide: Ribonuclease pancreatic (149 aa).

Residues 1–25 form the signal peptide; sequence MGLEKSLMLFPLFVLLLGWVQPSLG. The disordered stretch occupies residues 30–49; that stretch reads AQKFQRQHMDPAGSSSNSPT. Positions 32 and 35 each coordinate substrate. His-37 serves as the catalytic Proton acceptor. Cystine bridges form between Cys-51–Cys-109, Cys-65–Cys-120, Cys-83–Cys-135, and Cys-90–Cys-97. 66 to 70 lines the substrate pocket; that stretch reads KPVNT. An N-linked (GlcNAc...) asparagine glycan is attached at Asn-87. Residue Lys-91 coordinates substrate. His-144 (proton donor) is an active-site residue.

It belongs to the pancreatic ribonuclease family. As to quaternary structure, monomer. Interacts with and forms tight 1:1 complexes with RNH1. Dimerization of two such complexes may occur. Interaction with RNH1 inhibits this protein. In terms of tissue distribution, pancreas.

The protein localises to the secreted. It catalyses the reaction an [RNA] containing cytidine + H2O = an [RNA]-3'-cytidine-3'-phosphate + a 5'-hydroxy-ribonucleotide-3'-[RNA].. It carries out the reaction an [RNA] containing uridine + H2O = an [RNA]-3'-uridine-3'-phosphate + a 5'-hydroxy-ribonucleotide-3'-[RNA].. In terms of biological role, endonuclease that catalyzes the cleavage of RNA on the 3' side of pyrimidine nucleotides. Acts on single-stranded and double-stranded RNA. This Mus saxicola (Brown spiny mouse) protein is Ribonuclease pancreatic (Rnase1).